A 193-amino-acid polypeptide reads, in one-letter code: 3-isopropylmalate dehydratase small subunit (193 aa).

It belongs to the LeuD family. LeuD type 1 subfamily. As to quaternary structure, heterodimer of LeuC and LeuD.

The catalysed reaction is (2R,3S)-3-isopropylmalate = (2S)-2-isopropylmalate. Its pathway is amino-acid biosynthesis; L-leucine biosynthesis; L-leucine from 3-methyl-2-oxobutanoate: step 2/4. Its function is as follows. Catalyzes the isomerization between 2-isopropylmalate and 3-isopropylmalate, via the formation of 2-isopropylmaleate. This is 3-isopropylmalate dehydratase small subunit from Bacillus cereus (strain ATCC 10987 / NRS 248).